An 84-amino-acid chain; its full sequence is Small ribosomal subunit protein bS20 (84 aa).

The tract at residues 1-25 (MANIVSNEKTYRHTQKVRKENHAKM) is disordered.

This sequence belongs to the bacterial ribosomal protein bS20 family.

Its function is as follows. Binds directly to 16S ribosomal RNA. The protein is Small ribosomal subunit protein bS20 of Ureaplasma parvum serovar 3 (strain ATCC 700970).